The primary structure comprises 444 residues: Phosphoglucosamine mutase (444 aa).

Catalysis depends on Ser-104, which acts as the Phosphoserine intermediate. Positions 104, 243, 245, and 247 each coordinate Mg(2+). Ser-104 carries the phosphoserine modification.

The protein belongs to the phosphohexose mutase family. It depends on Mg(2+) as a cofactor. Activated by phosphorylation.

It catalyses the reaction alpha-D-glucosamine 1-phosphate = D-glucosamine 6-phosphate. Catalyzes the conversion of glucosamine-6-phosphate to glucosamine-1-phosphate. This is Phosphoglucosamine mutase from Neisseria meningitidis serogroup C / serotype 2a (strain ATCC 700532 / DSM 15464 / FAM18).